Here is a 380-residue protein sequence, read N- to C-terminus: Cytochrome b (380 aa).

Transmembrane regions (helical) follow at residues 34 to 54, 78 to 99, 114 to 134, and 179 to 199; these read FGSLLGICLATQILTGLLLAA, WLIRNLHANGASFFFICIYLHI, WNTGVILLLTLMATAFVGYVL, and FFTLHFLLPFMIMGLTLIHLT. The heme b site is built by His-84 and His-98. Positions 183 and 197 each coordinate heme b. Residue His-202 coordinates a ubiquinone. 4 helical membrane passes run 227–247, 289–309, 321–341, and 348–368; these read LKDILGFMLMLLPLMTLALFS, LGGVLALAASVLILFLAPLLH, LSQLLFWTLTANLLILTWVGS, and FMIIGQLASLTYFTILLVLFP.

Belongs to the cytochrome b family. The cytochrome bc1 complex contains 11 subunits: 3 respiratory subunits (MT-CYB, CYC1 and UQCRFS1), 2 core proteins (UQCRC1 and UQCRC2) and 6 low-molecular weight proteins (UQCRH/QCR6, UQCRB/QCR7, UQCRQ/QCR8, UQCR10/QCR9, UQCR11/QCR10 and a cleavage product of UQCRFS1). This cytochrome bc1 complex then forms a dimer. Heme b is required as a cofactor.

The protein resides in the mitochondrion inner membrane. Component of the ubiquinol-cytochrome c reductase complex (complex III or cytochrome b-c1 complex) that is part of the mitochondrial respiratory chain. The b-c1 complex mediates electron transfer from ubiquinol to cytochrome c. Contributes to the generation of a proton gradient across the mitochondrial membrane that is then used for ATP synthesis. This is Cytochrome b (MT-CYB) from Anthropoides virgo (Demoiselle crane).